The chain runs to 442 residues: Protein PRRC1-B (442 aa).

The disordered stretch occupies residues 1 to 24 (MMEESGIETTPPSTPPPSTIGTSV).

The protein belongs to the PRRC1 family.

The protein resides in the golgi apparatus. The sequence is that of Protein PRRC1-B (prrc1-b) from Xenopus laevis (African clawed frog).